An 88-amino-acid chain; its full sequence is Small ribosomal subunit protein bS20 (88 aa).

It belongs to the bacterial ribosomal protein bS20 family.

Its function is as follows. Binds directly to 16S ribosomal RNA. This Aromatoleum aromaticum (strain DSM 19018 / LMG 30748 / EbN1) (Azoarcus sp. (strain EbN1)) protein is Small ribosomal subunit protein bS20.